A 184-amino-acid chain; its full sequence is Ribosome maturation factor RimM (184 aa).

The PRC barrel domain occupies 106-184 (PGDYYWYQLE…RMIVDWDPEF (79 aa)).

The protein belongs to the RimM family. As to quaternary structure, binds ribosomal protein uS19.

The protein localises to the cytoplasm. Functionally, an accessory protein needed during the final step in the assembly of 30S ribosomal subunit, possibly for assembly of the head region. Essential for efficient processing of 16S rRNA. May be needed both before and after RbfA during the maturation of 16S rRNA. It has affinity for free ribosomal 30S subunits but not for 70S ribosomes. This Chromohalobacter salexigens (strain ATCC BAA-138 / DSM 3043 / CIP 106854 / NCIMB 13768 / 1H11) protein is Ribosome maturation factor RimM.